The following is a 300-amino-acid chain: Transcription termination/antitermination protein NusG (300 aa).

The tract at residues 1-99 (MSDPNVNDAI…EAEEPELDPI (99 aa)) is disordered. Composition is skewed to acidic residues over residues 14–41 (ESVE…EAAD) and 47–97 (ETDE…PELD).

This sequence belongs to the NusG family.

Participates in transcription elongation, termination and antitermination. This Streptomyces coelicolor (strain ATCC BAA-471 / A3(2) / M145) protein is Transcription termination/antitermination protein NusG.